Consider the following 860-residue polypeptide: Protein argonaute-3 (860 aa).

Met1 bears the N-acetylmethionine mark. Residues 230–349 (PVIQFMCEVL…LPLEVCNIVA (120 aa)) form the PAZ domain. The 302-residue stretch at 518-819 (LIIVILPGKT…VAFRARYHLV (302 aa)) folds into the Piwi domain. An interaction with guide RNA region spans residues 530–567 (YAEVKRVGDTLLGMATQCVQVKNVIKTSPQTLSNLCLK). A divalent metal cation contacts are provided by Asp598, Glu638, and Asp670. Residues 758 to 805 (QGTSRPSHYHVLWDDNFFTADELQLLTYQLCHTYVRCTRSVSIPAPAY) form an interaction with guide RNA region. Position 808 (His808) interacts with a divalent metal cation. A Phosphoserine modification is found at Ser825.

Belongs to the argonaute family. Ago subfamily. As to quaternary structure, interacts with EIF4B, IMP8, PRMT5 and TNRC6B. Interacts with APOBEC3F, APOBEC3G and APOBEC3H. Interacts with EDC4. Ubiquitinated on surface-exposed lysines by a SCF-like E3 ubiquitin-protein ligase complex containing ZSWIM8 during target-directed microRNA degradation (TDMD), a process that mediates degradation of microRNAs (miRNAs). Ubiquitination by the SCF-like E3 ubiquitin-protein ligase complex containing ZSWIM8 leads to its subsequent degradation, thereby exposing miRNAs for degradation. ZSWIM8 recognizes and binds AGO3 when it is engaged with a TDMD target.

It is found in the cytoplasm. The protein localises to the P-body. It carries out the reaction Endonucleolytic cleavage to 5'-phosphomonoester.. Its function is as follows. Required for RNA-mediated gene silencing (RNAi). Binds to short RNAs such as microRNAs (miRNAs) and represses the translation of mRNAs which are complementary to them. Proposed to be involved in stabilization of small RNA derivates (siRNA) derived from processed RNA polymerase III-transcribed Alu repeats containing a DR2 retinoic acid response element (RARE) in stem cells and in the subsequent siRNA-dependent degradation of a subset of RNA polymerase II-transcribed coding mRNAs by recruiting a mRNA decapping complex involving EDC4. Possesses RNA slicer activity but only on select RNAs bearing 5'- and 3'-flanking sequences to the region of guide-target complementarity. In Mus musculus (Mouse), this protein is Protein argonaute-3 (Ago3).